Reading from the N-terminus, the 399-residue chain is Accessory Sec system protein translocase subunit SecY2 (399 aa).

Helical transmembrane passes span 14-34 (IFFTCLILVIYIIGSNISIVS), 60-80 (LNIFSLGLGPWLSSMIILTLI), 102-122 (ALTLIISAAQGFYIIHSYINK), 128-148 (SNMLILLLVLITGTLLMVWLA), 152-172 (TTYGISGPMPIVLMSLVKSIF), 183-203 (ASLITMIIVLLVLALFILFFI), 237-257 (ISIMVSLSLFMLTNNIVNFIG), 272-292 (FTNPVGITIYLLLQMILGYFL), 335-355 (WFGSIVVAIVLAIPMYSALLV), and 362-382 (VYFTTQMIVFVYIGINIAETI).

This sequence belongs to the SecY/SEC61-alpha family. SecY2 subfamily. In terms of assembly, component of the accessory SecA2/SecY2 protein translocase complex required to export cell wall proteins. May form heterotrimers with SecE and SecG subunits.

Its subcellular location is the cell membrane. Its function is as follows. Part of the accessory SecA2/SecY2 system specifically required for export of possible cell wall proteins. The central subunit of a protein translocation channel. The protein is Accessory Sec system protein translocase subunit SecY2 of Staphylococcus epidermidis (strain ATCC 12228 / FDA PCI 1200).